Reading from the N-terminus, the 625-residue chain is tRNA uridine 5-carboxymethylaminomethyl modification enzyme MnmG (625 aa).

FAD is bound at residue 11 to 16 (GAGHAG). 271–285 (GPRYCPSIETKIVTF) provides a ligand contact to NAD(+).

The protein belongs to the MnmG family. In terms of assembly, homodimer. Heterotetramer of two MnmE and two MnmG subunits. The cofactor is FAD.

Its subcellular location is the cytoplasm. Its function is as follows. NAD-binding protein involved in the addition of a carboxymethylaminomethyl (cmnm) group at the wobble position (U34) of certain tRNAs, forming tRNA-cmnm(5)s(2)U34. The protein is tRNA uridine 5-carboxymethylaminomethyl modification enzyme MnmG of Parabacteroides distasonis (strain ATCC 8503 / DSM 20701 / CIP 104284 / JCM 5825 / NCTC 11152).